A 204-amino-acid chain; its full sequence is Imidazoleglycerol-phosphate dehydratase (204 aa).

It belongs to the imidazoleglycerol-phosphate dehydratase family.

It localises to the cytoplasm. The enzyme catalyses D-erythro-1-(imidazol-4-yl)glycerol 3-phosphate = 3-(imidazol-4-yl)-2-oxopropyl phosphate + H2O. The protein operates within amino-acid biosynthesis; L-histidine biosynthesis; L-histidine from 5-phospho-alpha-D-ribose 1-diphosphate: step 6/9. The polypeptide is Imidazoleglycerol-phosphate dehydratase (Albidiferax ferrireducens (strain ATCC BAA-621 / DSM 15236 / T118) (Rhodoferax ferrireducens)).